Here is a 1058-residue protein sequence, read N- to C-terminus: Isoleucine--tRNA ligase (1058 aa).

The short motif at 48-58 (PYTTGHIHLGT) is the 'HIGH' region element. The 'KMSKS' region motif lies at 596-600 (KMSKS). Position 599 (Lys599) interacts with ATP.

The protein belongs to the class-I aminoacyl-tRNA synthetase family. IleS type 2 subfamily. In terms of assembly, monomer. It depends on Zn(2+) as a cofactor.

It localises to the cytoplasm. It catalyses the reaction tRNA(Ile) + L-isoleucine + ATP = L-isoleucyl-tRNA(Ile) + AMP + diphosphate. Functionally, catalyzes the attachment of isoleucine to tRNA(Ile). As IleRS can inadvertently accommodate and process structurally similar amino acids such as valine, to avoid such errors it has two additional distinct tRNA(Ile)-dependent editing activities. One activity is designated as 'pretransfer' editing and involves the hydrolysis of activated Val-AMP. The other activity is designated 'posttransfer' editing and involves deacylation of mischarged Val-tRNA(Ile). The polypeptide is Isoleucine--tRNA ligase (Methanosarcina mazei (strain ATCC BAA-159 / DSM 3647 / Goe1 / Go1 / JCM 11833 / OCM 88) (Methanosarcina frisia)).